The sequence spans 264 residues: 2-dehydro-3-deoxy-D-gluconate 5-dehydrogenase (264 aa).

Residue 14–38 (LVTGSTHGLGMAMAKGLGLAGATIV) coordinates NAD(+). Ser147 is a binding site for substrate. Tyr160 (proton acceptor) is an active-site residue.

This sequence belongs to the short-chain dehydrogenases/reductases (SDR) family. As to quaternary structure, homotetramer.

It localises to the cytoplasm. The enzyme catalyses 2-dehydro-3-deoxy-D-gluconate + NAD(+) = 3-deoxy-D-glycero-2,5-hexodiulosonate + NADH + H(+). In terms of biological role, 2-dehydro-3-deoxy-D-gluconate 5-dehydrogenase involved in ulvan degradation. Ulvan is the main polysaccharide component of the Ulvales (green seaweed) cell wall. It is composed of disaccharide building blocks comprising 3-sulfated rhamnose (Rha3S) linked to D-glucuronic acid (GlcA), L-iduronic acid (IduA), or D-xylose (Xyl). Catalyzes the reversible reduction of 2,5-diketo-3-deoxygluconate (DKII or 4,6-dihydroxy-2,5-dioxohexanoate) into 2-keto-3-deoxygluconate (KDG or 2-dehydro-3-deoxygluconate) with a concomitant oxidation of NADH. The chain is 2-dehydro-3-deoxy-D-gluconate 5-dehydrogenase (kduD) from Formosa agariphila (strain DSM 15362 / KCTC 12365 / LMG 23005 / KMM 3901 / M-2Alg 35-1).